The following is a 205-amino-acid chain: Probable inactive peroxygenase-like protein (205 aa).

The Proline-knot signature appears at 79–88 (PVQLFGYILP). Serine 183 carries the phosphoserine modification.

Belongs to the caleosin family.

The protein resides in the lipid droplet. The polypeptide is Probable inactive peroxygenase-like protein (Arabidopsis thaliana (Mouse-ear cress)).